Reading from the N-terminus, the 136-residue chain is Large ribosomal subunit protein uL16 (136 aa).

Belongs to the universal ribosomal protein uL16 family. In terms of assembly, part of the 50S ribosomal subunit.

Binds 23S rRNA and is also seen to make contacts with the A and possibly P site tRNAs. The chain is Large ribosomal subunit protein uL16 from Photobacterium profundum (strain SS9).